A 921-amino-acid polypeptide reads, in one-letter code: Isoleucine--tRNA ligase (921 aa).

The 'HIGH' region motif lies at 57–67 (PYANGDIHMGH). L-isoleucyl-5'-AMP is bound at residue Glu552. Positions 593-597 (KMSKS) match the 'KMSKS' region motif. Lys596 contacts ATP. Residues Cys888, Cys891, Cys908, and Cys911 each coordinate Zn(2+).

Belongs to the class-I aminoacyl-tRNA synthetase family. IleS type 1 subfamily. As to quaternary structure, monomer. The cofactor is Zn(2+).

It localises to the cytoplasm. The catalysed reaction is tRNA(Ile) + L-isoleucine + ATP = L-isoleucyl-tRNA(Ile) + AMP + diphosphate. Functionally, catalyzes the attachment of isoleucine to tRNA(Ile). As IleRS can inadvertently accommodate and process structurally similar amino acids such as valine, to avoid such errors it has two additional distinct tRNA(Ile)-dependent editing activities. One activity is designated as 'pretransfer' editing and involves the hydrolysis of activated Val-AMP. The other activity is designated 'posttransfer' editing and involves deacylation of mischarged Val-tRNA(Ile). The chain is Isoleucine--tRNA ligase from Bacillus cereus (strain AH187).